We begin with the raw amino-acid sequence, 832 residues long: Protein monoglycylase TTLL8 (832 aa).

Over residues 1–13 (MSCPPTPNPPFRP) the composition is skewed to pro residues. Disordered regions lie at residues 1 to 84 (MSCP…QDLS) and 277 to 304 (GKSK…KLPS). Composition is skewed to basic and acidic residues over residues 46–59 (QLRE…ERKK), 66–75 (DGDHKEENKL), and 280–299 (KKEE…ENPD). One can recognise a TTL domain in the interval 271–624 (YCSKVKGKSK…RKLDRNCDIG (354 aa)). ATP contacts are provided by residues lysine 397, 403 to 404 (RG), 435 to 438 (QKYI), 448 to 450 (KFD), and 492 to 493 (CN). Residue arginine 403 coordinates a protein. Serine 495 contacts L-glutamate. Mg(2+) is bound by residues aspartate 570, glutamate 583, and asparagine 585. Glutamate 583 is a binding site for ATP.

The cofactor is Mg(2+). As to expression, highly expressed in testis. Expressed in brain, heart, kidney, liver, lung, muscle, spleen and trachea. Expressed in sperm flagellum. In the brain, specifically expressed in ependymal cilia.

It localises to the cytoplasm. The protein localises to the cytoskeleton. The protein resides in the cell projection. Its subcellular location is the cilium. It is found in the cilium axoneme. It localises to the flagellum axoneme. It carries out the reaction L-glutamyl-[protein] + glycine + ATP = glycyl-L-glutamyl-[protein] + ADP + phosphate + H(+). In terms of biological role, monoglycylase which modifies both tubulin and non-tubulin proteins, adding a single glycine on the gamma-carboxyl groups of specific glutamate residues to generate monoglycine side chains within the C-terminal tail of target proteins. Not involved in elongation step of the polyglycylation reaction. Preferentially monoglycylates alpha-tubulin over beta-tubulin. Together with TTLL3, mediates microtubule glycylation of primary and motile cilia, which is essential for their stability and maintenance. Together with TTLL3, glycylates sperm flagella which regulates axonemal dynein motor activity, thereby controlling flagellar beat, directional sperm swimming and male fertility. Monoglycylates non-tubulin proteins such as ANP32A, ANP32B, SET, NCL and NAP1. This Mus musculus (Mouse) protein is Protein monoglycylase TTLL8.